Reading from the N-terminus, the 321-residue chain is Reticulon-2 (321 aa).

2 disordered regions span residues 1-36 and 65-85; these read MGHV…SPVT and PPVR…PREE. The Reticulon domain maps to 134–321; it reads VKDLLYWRDI…TVKKPPAKQK (188 aa). 2 helical membrane-spanning segments follow: residues 163–183 and 250–270; these read FSVI…TLTL and FLVI…ITVL.

Its subcellular location is the endoplasmic reticulum membrane. It is found in the sarcoplasmic reticulum membrane. The protein localises to the cell membrane. It localises to the sarcolemma. The protein resides in the T-tubule. Its subcellular location is the cytoplasm. It is found in the myofibril. The protein localises to the sarcomere. It localises to the z line. The protein resides in the cytoskeleton. In terms of biological role, inhibits amyloid precursor protein processing, probably by blocking BACE1 activity. Enhances trafficking of the glutamate transporter SLC1A1/EAAC1 from the endoplasmic reticulum to the cell surface. Plays a role in the translocation of SLC2A4/GLUT4 from intracellular membranes to the cell membrane which facilitates the uptake of glucose into the cell. This Xenopus tropicalis (Western clawed frog) protein is Reticulon-2.